Reading from the N-terminus, the 240-residue chain is Ribosomal RNA large subunit methyltransferase E (240 aa).

The segment covering 1-20 (MSKAGGNKGGVKTGGRGGAG) has biased composition (gly residues). The segment at 1-27 (MSKAGGNKGGVKTGGRGGAGSSNLQVR) is disordered. 5 residues coordinate S-adenosyl-L-methionine: Gly92, Trp94, Asp115, Asp131, and Asp155. The active-site Proton acceptor is the Lys195.

This sequence belongs to the class I-like SAM-binding methyltransferase superfamily. RNA methyltransferase RlmE family.

Its subcellular location is the cytoplasm. The catalysed reaction is uridine(2552) in 23S rRNA + S-adenosyl-L-methionine = 2'-O-methyluridine(2552) in 23S rRNA + S-adenosyl-L-homocysteine + H(+). Specifically methylates the uridine in position 2552 of 23S rRNA at the 2'-O position of the ribose in the fully assembled 50S ribosomal subunit. The protein is Ribosomal RNA large subunit methyltransferase E of Brucella anthropi (strain ATCC 49188 / DSM 6882 / CCUG 24695 / JCM 21032 / LMG 3331 / NBRC 15819 / NCTC 12168 / Alc 37) (Ochrobactrum anthropi).